We begin with the raw amino-acid sequence, 587 residues long: Glutamine--tRNA ligase (587 aa).

The short motif at 58–68 (PEPNGYLHIGH) is the 'HIGH' region element. ATP is bound by residues 59–61 (EPN) and 65–71 (HIGHAKS). L-glutamine contacts are provided by D91 and Y240. ATP-binding positions include T259 and 294 to 295 (RL). Positions 301–305 (VTSKR) match the 'KMSKS' region motif.

This sequence belongs to the class-I aminoacyl-tRNA synthetase family. As to quaternary structure, monomer.

The protein resides in the cytoplasm. The catalysed reaction is tRNA(Gln) + L-glutamine + ATP = L-glutaminyl-tRNA(Gln) + AMP + diphosphate. The sequence is that of Glutamine--tRNA ligase from Bordetella bronchiseptica (strain ATCC BAA-588 / NCTC 13252 / RB50) (Alcaligenes bronchisepticus).